The following is a 434-amino-acid chain: MKRTMLYLSLLAVSCSVSAAKYPVLTESSPEKAGFNVERLNQMDRWISQQVDAGYPGVNLLIIKDNQIVYRKAWGAAKKYDGSVLMAQPVKATTGTLYDLASNTKMYATNFALQKLMSEGKLHPDDLIAKYISGFADSPNDTIKGKNTLRISDLLHHSGGFPADPQYPNKAVAGALYSQDKGQTLEMIKRTPLEYQPGSKHIYSDVDYMLLGFIVESVTGQPLDRYVEESIYRPLGLTHTVFNPLLKGFKPQQIAATELNGNTRDGVIHFPNIRTSTHWGQVHDEKAFYSMGGVSGHAGLFSNTGDIAVLMQTMLNGGGYGDVQLFSAETVKMFTTSSKEDATFGLGWRVNGNATMTPTFGTLASPQTYGHTGWTGTVTVIDPVNHMAIVMLSNKPHSPVADPQKNPNMFESGQLPIATYGWVVDQVYAALKQK.

A helical; Signal-anchor membrane pass occupies residues 7-25 (YLSLLAVSCSVSAAKYPVL).

This sequence belongs to the peptidase S12 family. YfeW subfamily.

The protein resides in the cell inner membrane. The catalysed reaction is Preferential cleavage: (Ac)2-L-Lys-D-Ala-|-D-Ala. Also transpeptidation of peptidyl-alanyl moieties that are N-acyl substituents of D-alanine.. This chain is Putative D-alanyl-D-alanine carboxypeptidase, found in Escherichia coli O157:H7.